The following is an 87-amino-acid chain: Small ribosomal subunit protein uS17 (87 aa).

It belongs to the universal ribosomal protein uS17 family. Part of the 30S ribosomal subunit.

Its function is as follows. One of the primary rRNA binding proteins, it binds specifically to the 5'-end of 16S ribosomal RNA. The chain is Small ribosomal subunit protein uS17 from Staphylococcus aureus (strain JH1).